The sequence spans 250 residues: Maleate isomerase (250 aa).

Residues Asn-15, 80-82 (CLV), Tyr-137, and Asn-167 contribute to the substrate site. Cys-80 acts as the Nucleophile in catalysis. At Cys-80 the chain carries S-(2-succinyl)cysteine. The active-site Proton donor is the Cys-198. 199–200 (VQ) serves as a coordination point for substrate.

This sequence belongs to the maleate isomerase family. In terms of assembly, homodimer.

It catalyses the reaction maleate = fumarate. It functions in the pathway cofactor degradation; nicotinate degradation. In terms of biological role, catalyzes cis-trans isomerization of the C2-C3 double bond in maleate to yield fumarate in the aerobic nicotinate degradation pathway. The polypeptide is Maleate isomerase (Pseudomonas putida (strain ATCC 47054 / DSM 6125 / CFBP 8728 / NCIMB 11950 / KT2440)).